The sequence spans 66 residues: Phylloseptin-H8 (66 aa).

The N-terminal stretch at 1 to 22 (MAFLKKSLFLVLFLGLVSLSIC) is a signal peptide. A propeptide spanning residues 23 to 44 (EEEKRETEEEENDQEEDDKSEE) is cleaved from the precursor. The disordered stretch occupies residues 25 to 44 (EKRETEEEENDQEEDDKSEE). The segment covering 30–41 (EEEENDQEEDDK) has biased composition (acidic residues). Residue Leu65 is modified to Leucine amide.

In terms of tissue distribution, expressed by the skin glands.

The protein resides in the secreted. Functionally, has antimicrobial activity. The sequence is that of Phylloseptin-H8 from Pithecopus hypochondrialis (Orange-legged leaf frog).